Reading from the N-terminus, the 264-residue chain is MTVFQALVLGIIQGLGEFLPISSSAHLVLVPWLFGWQYAGLTFDVALHLGTLISIAAFFWKEWIVLIGSALRRRGTHEARMFWYLVLATVPGAVMGYLLEEQAETVFRTPLLIGIMLIVMGIFLYWADAKKPAVKGMREISMADSLLIGLSQAFAIIPGVSRSGVTMTAGRALGLSRETAARFSFLLSTPIIVGAGLFKLKDITPGDVNTAFITGVASSALVGFISISFLLKYLTGRSFALFVWYRLVAGLAVIVLAAARQFGF.

The next 8 membrane-spanning stretches (helical) occupy residues 1–21, 40–60, 81–101, 109–129, 140–160, 183–203, 211–231, and 239–259; these read MTVF…FLPI, GLTF…AFFW, MFWY…LLEE, TPLL…WADA, ISMA…IPGV, FSFL…LKDI, AFIT…SFLL, and FALF…LAAA.

The protein belongs to the UppP family.

It is found in the cell membrane. The catalysed reaction is di-trans,octa-cis-undecaprenyl diphosphate + H2O = di-trans,octa-cis-undecaprenyl phosphate + phosphate + H(+). Catalyzes the dephosphorylation of undecaprenyl diphosphate (UPP). Confers resistance to bacitracin. The protein is Undecaprenyl-diphosphatase of Pelotomaculum thermopropionicum (strain DSM 13744 / JCM 10971 / SI).